A 434-amino-acid chain; its full sequence is Trigger factor (434 aa).

Positions 161–246 (KDIVTIDFKG…IHKVEEPQLP (86 aa)) constitute a PPIase FKBP-type domain.

Belongs to the FKBP-type PPIase family. Tig subfamily.

The protein localises to the cytoplasm. It catalyses the reaction [protein]-peptidylproline (omega=180) = [protein]-peptidylproline (omega=0). Functionally, involved in protein export. Acts as a chaperone by maintaining the newly synthesized protein in an open conformation. Functions as a peptidyl-prolyl cis-trans isomerase. In Marinobacter nauticus (strain ATCC 700491 / DSM 11845 / VT8) (Marinobacter aquaeolei), this protein is Trigger factor.